The primary structure comprises 874 residues: Coatomer subunit gamma-1 (874 aa).

Positions 1–11 (MLKKFDKKDEE) are enriched in basic and acidic residues. The disordered stretch occupies residues 1 to 21 (MLKKFDKKDEESGGGSNPFQH). HEAT repeat units follow at residues 64–101 (TEAT…IAED), 283–320 (KELA…KHPS), 322–355 (VTAC…GSEG), and 356–392 (SIDR…KYPR). Phosphothreonine is present on Thr594. The interaction with ZNF289/ARFGAP2 stretch occupies residues 609–874 (RQEIFQEQLA…PVDIVLASVG (266 aa)).

Belongs to the COPG family. As to quaternary structure, oligomeric complex that consists of at least the alpha, beta, beta', gamma, delta, epsilon and zeta subunits. Interacts with ZNF289/ARFGAP2 through its C-terminal appendage domain. Interacts with EGFR upon EGF treatment; interaction is essential for regulation of EGF-dependent nuclear transport of EGFR by retrograde trafficking from the Golgi to the ER. The coatomer interacts with KDEL receptors; the interaction is important for retrograde trafficking of KDEL-bearing proteins from the Golgi to the endoplasmic reticulum. Interacts with COPB1. Interacts with TMED10 (via C-terminus). Interacts with TMED2, TMED3, TMED7 and TMED9.

Its subcellular location is the cytoplasm. It is found in the cytosol. It localises to the golgi apparatus membrane. The protein resides in the cytoplasmic vesicle. The protein localises to the COPI-coated vesicle membrane. Functionally, the coatomer is a cytosolic protein complex that binds to dilysine motifs and reversibly associates with Golgi non-clathrin-coated vesicles, which further mediate biosynthetic protein transport from the ER, via the Golgi up to the trans Golgi network. Coatomer complex is required for budding from Golgi membranes, and is essential for the retrograde Golgi-to-ER transport of dilysine-tagged proteins. In mammals, the coatomer can only be recruited by membranes associated to ADP-ribosylation factors (ARFs), which are small GTP-binding proteins; the complex also influences the Golgi structural integrity, as well as the processing, activity, and endocytic recycling of LDL receptors. Required for limiting lipid storage in lipid droplets. Involved in lipid homeostasis by regulating the presence of perilipin family members PLIN2 and PLIN3 at the lipid droplet surface and promoting the association of adipocyte triglyceride lipase (PNPLA2) with the lipid droplet surface to mediate lipolysis. The chain is Coatomer subunit gamma-1 (COPG1) from Bos taurus (Bovine).